We begin with the raw amino-acid sequence, 201 residues long: Natural cytotoxicity triggering receptor 3 (201 aa).

A signal peptide spans 1–18 (MAWMLLLILIMVHPGSCA). An Ig-like domain is found at 19–126 (LWVSQPPEIR…VGTGNGTRLV (108 aa)). Residues 19-135 (LWVSQPPEIR…VVEKEHPQLG (117 aa)) are Extracellular-facing. Cysteines 39 and 108 form a disulfide. N-linked (GlcNAc...) asparagine glycosylation is found at N42 and N121. The chain crosses the membrane as a helical span at residues 136–156 (AGTVLLLRAGFYAVSFLSVAV). Topologically, residues 157-201 (GSTVYYQGKCLTWKGPRRQLPAVVPAPLPPPCGSSAQLLPPVPGG) are cytoplasmic.

The protein belongs to the natural cytotoxicity receptor (NCR) family. In terms of assembly, homodimer in the unliganted form. Interacts with CD3Z. Interacts with and is activated by binding to NCR3LG1. Interacts with and is activated by binding to BAG6. Interacts with and is inhibited by binding to LGALS3.

The protein resides in the cell membrane. In terms of biological role, cell membrane receptor of natural killer/NK cells that is activated by binding of extracellular ligands including BAG6 and NCR3LG1. Stimulates NK cells cytotoxicity toward neighboring cells producing these ligands. It controls, for instance, NK cells cytotoxicity against tumor cells. Engagement of NCR3 by BAG6 also promotes myeloid dendritic cells (DC) maturation, both through killing DCs that did not acquire a mature phenotype, and inducing the release by NK cells of TNFA and IFNG that promote DC maturation. The chain is Natural cytotoxicity triggering receptor 3 (NCR3) from Pan troglodytes (Chimpanzee).